A 565-amino-acid polypeptide reads, in one-letter code: Adenine deaminase (565 aa).

It belongs to the metallo-dependent hydrolases superfamily. Adenine deaminase family. Requires Mn(2+) as cofactor.

It catalyses the reaction adenine + H2O + H(+) = hypoxanthine + NH4(+). In Cereibacter sphaeroides (strain ATCC 17023 / DSM 158 / JCM 6121 / CCUG 31486 / LMG 2827 / NBRC 12203 / NCIMB 8253 / ATH 2.4.1.) (Rhodobacter sphaeroides), this protein is Adenine deaminase.